Reading from the N-terminus, the 291-residue chain is AA14 family lytic polysaccharide monooxygenase (291 aa).

The first 17 residues, 1–17, serve as a signal peptide directing secretion; that stretch reads MLTTAILFTSLAGSAYA. Asparagine 141 is a glycosylation site (N-linked (GlcNAc...) asparagine). Disulfide bonds link cysteine 192–cysteine 197, cysteine 199–cysteine 220, and cysteine 240–cysteine 247.

Belongs to the polysaccharide monooxygenase AA14 family. Requires Cu(2+) as cofactor.

It localises to the secreted. Its function is as follows. Lytic polysaccharide monooxygenase (LPMO) that is active against heteroxylan, xyloglucan and cellulose in beta-cellulose and released native oligosaccharides and corresponding C1- and/or C4-oxidized products. May act mainly on heteroxylan with numerous arabinosyl substituents between cellulose fibers rather than on recalcitrant xylan tightly associated with cellulose. Catalysis by LPMOs requires the reduction of the active-site copper from Cu(II) to Cu(I) by a reducing agent and H(2)O(2) or O(2) as a cosubstrate. Shows a branched chain preference, and has synergistic effects with the Penicillium parvum debranching enzyme ABF62C in an enzyme- and ascorbic acid-dependent manner. Also has synergistic effects with the Penicillium parvum GH10 endoxylanase XYN1, and the degree of synergy was greater with step-by-step addition than with simultaneous addition. The protein is AA14 family lytic polysaccharide monooxygenase of Sordaria brevicollis.